Reading from the N-terminus, the 136-residue chain is MARTKQTARKSTGGKAPRKQLATKVARKSAPATGGVKKPHRYRPGTVALREIRRYQKSTELLIRKLPFQRLMREIAQDFKTDLRFQSSAVMALQEACESYLVGLFEDTNLCVIHAKRVTIMPKDIQLARRIRGERA.

Positions 1–43 are disordered; sequence MARTKQTARKSTGGKAPRKQLATKVARKSAPATGGVKKPHRYR. Residue arginine 3 is modified to Asymmetric dimethylarginine; by PRMT6; alternate. Position 3 is a citrulline; alternate (arginine 3). Threonine 4 carries the phosphothreonine; by HASPIN modification. Lysine 5 is modified (allysine; alternate). An N6,N6,N6-trimethyllysine; alternate modification is found at lysine 5. Lysine 5 bears the N6,N6-dimethyllysine; alternate mark. Lysine 5 is subject to N6-(2-hydroxyisobutyryl)lysine; alternate. An N6-(beta-hydroxybutyryl)lysine; alternate modification is found at lysine 5. At lysine 5 the chain carries N6-acetyllysine; alternate. At lysine 5 the chain carries N6-methyllysine; alternate. Glutamine 6 carries the 5-glutamyl dopamine; alternate modification. A 5-glutamyl serotonin; alternate modification is found at glutamine 6. Phosphothreonine; by PKC is present on threonine 7. A Citrulline; alternate modification is found at arginine 9. Arginine 9 is subject to Symmetric dimethylarginine; by PRMT5; alternate. At lysine 10 the chain carries N6,N6,N6-trimethyllysine; alternate. The residue at position 10 (lysine 10) is an N6,N6-dimethyllysine; alternate. Lysine 10 is subject to N6-(2-hydroxyisobutyryl)lysine; alternate. The residue at position 10 (lysine 10) is an N6-(beta-hydroxybutyryl)lysine; alternate. Lysine 10 carries the post-translational modification N6-acetyllysine; alternate. Position 10 is an N6-methyllysine; alternate (lysine 10). Lysine 10 carries the N6-lactoyllysine; alternate modification. At serine 11 the chain carries ADP-ribosylserine; alternate. At serine 11 the chain carries Phosphoserine; alternate; by AURKB, AURKC, RPS6KA3, RPS6KA4 and RPS6KA5. Threonine 12 is subject to Phosphothreonine; by PKC. At lysine 15 the chain carries N6-(2-hydroxyisobutyryl)lysine; alternate. Lysine 15 bears the N6-(beta-hydroxybutyryl)lysine; alternate mark. Lysine 15 is subject to N6-acetyllysine; alternate. Lysine 15 carries the N6-lactoyllysine; alternate modification. Residue lysine 15 is modified to N6-glutaryllysine; alternate. Lysine 15 bears the N6-succinyllysine; alternate mark. Arginine 18 is subject to Citrulline; alternate. Arginine 18 bears the Asymmetric dimethylarginine; by CARM1; alternate mark. N6-(2-hydroxyisobutyryl)lysine; alternate occurs at positions 19 and 24. 2 positions are modified to N6-(beta-hydroxybutyryl)lysine; alternate: lysine 19 and lysine 24. N6-acetyllysine; alternate occurs at positions 19 and 24. Residues lysine 19 and lysine 24 each carry the N6-methyllysine; alternate modification. An N6-lactoyllysine; alternate mark is found at lysine 19 and lysine 24. N6-glutaryllysine; alternate is present on residues lysine 19 and lysine 24. N6-butyryllysine; alternate occurs at positions 19 and 24. The residue at position 27 (arginine 27) is a Citrulline. The residue at position 28 (lysine 28) is an N6,N6,N6-trimethyllysine; alternate. Lysine 28 carries the post-translational modification N6,N6-dimethyllysine; alternate. The residue at position 28 (lysine 28) is an N6-(2-hydroxyisobutyryl)lysine; alternate. Lysine 28 is modified (N6-acetyllysine; alternate). The residue at position 28 (lysine 28) is an N6-methyllysine; alternate. At lysine 28 the chain carries N6-lactoyllysine; alternate. Lysine 28 carries the post-translational modification N6-glutaryllysine; alternate. The residue at position 29 (serine 29) is an ADP-ribosylserine; alternate. Position 29 is a phosphoserine; alternate; by AURKB, AURKC and RPS6KA5 (serine 29). N6,N6,N6-trimethyllysine; alternate is present on lysine 37. Position 37 is an N6,N6-dimethyllysine; alternate (lysine 37). Lysine 37 is subject to N6-(2-hydroxyisobutyryl)lysine; alternate. Lysine 37 is subject to N6-acetyllysine; alternate. Lysine 37 bears the N6-methyllysine; alternate mark. Lysine 38 bears the N6-methyllysine mark. Tyrosine 42 is subject to Phosphotyrosine. Lysine 57 is subject to N6,N6,N6-trimethyllysine; alternate. Lysine 57 carries the post-translational modification N6-(2-hydroxyisobutyryl)lysine; alternate. Position 57 is an N6-(beta-hydroxybutyryl)lysine; alternate (lysine 57). Residue lysine 57 is modified to N6-acetyllysine; alternate. Residue lysine 57 is modified to N6-lactoyllysine; alternate. N6-glutaryllysine; alternate is present on lysine 57. Residue lysine 57 is modified to N6-succinyllysine; alternate. N6-methyllysine; by EHMT2; alternate is present on lysine 57. Serine 58 carries the post-translational modification Phosphoserine. Residues lysine 65 and lysine 80 each carry the N6-(2-hydroxyisobutyryl)lysine; alternate modification. Lysine 65 and lysine 80 each carry N6-methyllysine; alternate. Lysine 80 is subject to N6,N6,N6-trimethyllysine; alternate. N6,N6-dimethyllysine; alternate is present on lysine 80. Residue lysine 80 is modified to N6-acetyllysine; alternate. Lysine 80 carries the N6-lactoyllysine; alternate modification. The residue at position 80 (lysine 80) is an N6-glutaryllysine; alternate. Lysine 80 bears the N6-succinyllysine; alternate mark. At threonine 81 the chain carries Phosphothreonine. Serine 87 is subject to Phosphoserine. At threonine 108 the chain carries Phosphothreonine. An N6-acetyllysine; alternate mark is found at lysine 116 and lysine 123. 2 positions are modified to N6-glutaryllysine; alternate: lysine 116 and lysine 123. Lysine 123 is modified (N6-(2-hydroxyisobutyryl)lysine; alternate). Lysine 123 is modified (N6-methyllysine; alternate). An N6-succinyllysine; alternate modification is found at lysine 123.

Belongs to the histone H3 family. In terms of assembly, the nucleosome is a histone octamer containing two molecules each of H2A, H2B, H3 and H4 assembled in one H3-H4 heterotetramer and two H2A-H2B heterodimers. The octamer wraps approximately 147 bp of DNA. Interacts with TONSL; CHAF1A and CHAF1B. In terms of processing, acetylation is generally linked to gene activation. Acetylation on Lys-10 (H3K9ac) impairs methylation at Arg-9 (H3R8me2s). Acetylation on Lys-19 (H3K18ac) and Lys-24 (H3K24ac) favors methylation at Arg-18 (H3R17me). Acetylation at Lys-123 (H3K122ac) by EP300/p300 plays a central role in chromatin structure: localizes at the surface of the histone octamer and stimulates transcription, possibly by promoting nucleosome instability. Post-translationally, citrullination at Arg-9 (H3R8ci) and/or Arg-18 (H3R17ci) by PADI4 impairs methylation and represses transcription. Asymmetric dimethylation at Arg-18 (H3R17me2a) by CARM1 is linked to gene activation. Symmetric dimethylation at Arg-9 (H3R8me2s) by PRMT5 is linked to gene repression. Asymmetric dimethylation at Arg-3 (H3R2me2a) by PRMT6 is linked to gene repression and is mutually exclusive with H3 Lys-5 methylation (H3K4me2 and H3K4me3). H3R2me2a is present at the 3' of genes regardless of their transcription state and is enriched on inactive promoters, while it is absent on active promoters. In terms of processing, methylation at Lys-5 (H3K4me), Lys-37 (H3K36me) and Lys-80 (H3K79me) are linked to gene activation. Methylation at Lys-5 (H3K4me) facilitates subsequent acetylation of H3 and H4. Methylation at Lys-80 (H3K79me) is associated with DNA double-strand break (DSB) responses and is a specific target for TP53BP1. Methylation at Lys-10 (H3K9me) and Lys-28 (H3K27me) are linked to gene repression. Methylation at Lys-10 (H3K9me) is a specific target for HP1 proteins (CBX1, CBX3 and CBX5) and prevents subsequent phosphorylation at Ser-11 (H3S10ph) and acetylation of H3 and H4. Methylation at Lys-5 (H3K4me) and Lys-80 (H3K79me) require preliminary monoubiquitination of H2B at 'Lys-120'. Methylation at Lys-10 (H3K9me) and Lys-28 (H3K27me) are enriched in inactive X chromosome chromatin. Monomethylation at Lys-57 (H3K56me1) by EHMT2/G9A in G1 phase promotes interaction with PCNA and is required for DNA replication. Post-translationally, phosphorylated at Thr-4 (H3T3ph) by HASPIN during prophase and dephosphorylated during anaphase. Phosphorylation at Ser-11 (H3S10ph) by AURKB is crucial for chromosome condensation and cell-cycle progression during mitosis and meiosis. In addition phosphorylation at Ser-11 (H3S10ph) by RPS6KA4 and RPS6KA5 is important during interphase because it enables the transcription of genes following external stimulation, like mitogens, stress, growth factors or UV irradiation and result in the activation of genes, such as c-fos and c-jun. Phosphorylation at Ser-11 (H3S10ph), which is linked to gene activation, prevents methylation at Lys-10 (H3K9me) but facilitates acetylation of H3 and H4. Phosphorylation at Ser-11 (H3S10ph) by AURKB mediates the dissociation of HP1 proteins (CBX1, CBX3 and CBX5) from heterochromatin. Phosphorylation at Ser-11 (H3S10ph) is also an essential regulatory mechanism for neoplastic cell transformation. Phosphorylated at Ser-29 (H3S28ph) by MAP3K20 isoform 1, RPS6KA5 or AURKB during mitosis or upon ultraviolet B irradiation. Phosphorylation at Thr-7 (H3T6ph) by PRKCB is a specific tag for epigenetic transcriptional activation that prevents demethylation of Lys-5 (H3K4me) by LSD1/KDM1A. At centromeres, specifically phosphorylated at Thr-12 (H3T11ph) from prophase to early anaphase, by DAPK3 and PKN1. Phosphorylation at Thr-12 (H3T11ph) by PKN1 or isoform M2 of PKM (PKM2) is a specific tag for epigenetic transcriptional activation that promotes demethylation of Lys-10 (H3K9me) by KDM4C/JMJD2C. Phosphorylation at Tyr-42 (H3Y41ph) by JAK2 promotes exclusion of CBX5 (HP1 alpha) from chromatin. Ubiquitinated. In terms of processing, lysine deamination at Lys-5 (H3K4all) to form allysine is mediated by LOXL2. Allysine formation by LOXL2 only takes place on H3K4me3 and results in gene repression. Post-translationally, butyrylation of histones marks active promoters and competes with histone acetylation. It is present during late spermatogenesis. Succinylation at Lys-80 (H3K79succ) by KAT2A takes place with a maximum frequency around the transcription start sites of genes. It gives a specific tag for epigenetic transcription activation. Desuccinylation at Lys-123 (H3K122succ) by SIRT7 in response to DNA damage promotes chromatin condensation and double-strand breaks (DSBs) repair. In terms of processing, serine ADP-ribosylation constitutes the primary form of ADP-ribosylation of proteins in response to DNA damage. Serine ADP-ribosylation at Ser-11 (H3S10ADPr) is mutually exclusive with phosphorylation at Ser-11 (H3S10ph) and impairs acetylation at Lys-10 (H3K9ac). In terms of tissue distribution, expressed in testicular cells.

It localises to the nucleus. The protein resides in the chromosome. In terms of biological role, core component of nucleosome. Nucleosomes wrap and compact DNA into chromatin, limiting DNA accessibility to the cellular machineries which require DNA as a template. Histones thereby play a central role in transcription regulation, DNA repair, DNA replication and chromosomal stability. DNA accessibility is regulated via a complex set of post-translational modifications of histones, also called histone code, and nucleosome remodeling. The chain is Histone H3.1t from Homo sapiens (Human).